Reading from the N-terminus, the 151-residue chain is D-aminoacyl-tRNA deacylase (151 aa).

Residues 137–138 (GP) carry the Gly-cisPro motif, important for rejection of L-amino acids motif.

It belongs to the DTD family. Homodimer.

Its subcellular location is the cytoplasm. The enzyme catalyses glycyl-tRNA(Ala) + H2O = tRNA(Ala) + glycine + H(+). It catalyses the reaction a D-aminoacyl-tRNA + H2O = a tRNA + a D-alpha-amino acid + H(+). Functionally, an aminoacyl-tRNA editing enzyme that deacylates mischarged D-aminoacyl-tRNAs. Also deacylates mischarged glycyl-tRNA(Ala), protecting cells against glycine mischarging by AlaRS. Acts via tRNA-based rather than protein-based catalysis; rejects L-amino acids rather than detecting D-amino acids in the active site. By recycling D-aminoacyl-tRNA to D-amino acids and free tRNA molecules, this enzyme counteracts the toxicity associated with the formation of D-aminoacyl-tRNA entities in vivo and helps enforce protein L-homochirality. This is D-aminoacyl-tRNA deacylase from Fusobacterium nucleatum subsp. nucleatum (strain ATCC 25586 / DSM 15643 / BCRC 10681 / CIP 101130 / JCM 8532 / KCTC 2640 / LMG 13131 / VPI 4355).